The sequence spans 430 residues: Acetyl-CoA acetyltransferase FG05087, mitochondrial (430 aa).

The transit peptide at 1-32 (MTVTQLRSAGRLAQLAGHVNGARQFSTRPALR) directs the protein to the mitochondrion. Cys122 serves as the catalytic Acyl-thioester intermediate. Tyr217 contributes to the K(+) binding site. Lys260 is a CoA binding site. Ala278 serves as a coordination point for K(+). Ser282 lines the CoA pocket. Active-site proton acceptor residues include His385 and Cys413. A chloride-binding site is contributed by Asn414.

The protein belongs to the thiolase-like superfamily. Thiolase family. Homotetramer. The cofactor is K(+).

It is found in the mitochondrion. The enzyme catalyses 2 acetyl-CoA = acetoacetyl-CoA + CoA. Its function is as follows. Mitochondrial acetyl-CoA acetyltransferase that catalyzes both the formation and degradation of acetoacetyl-CoA. Seems not to be involved in ergosterol biosynthesis. Plays an important role in growth, morphogenesis and maintaining mitochondrial function including the response to oxidative stresses. This is Acetyl-CoA acetyltransferase FG05087, mitochondrial from Gibberella zeae (strain ATCC MYA-4620 / CBS 123657 / FGSC 9075 / NRRL 31084 / PH-1) (Wheat head blight fungus).